A 736-amino-acid chain; its full sequence is Prolyl 3-hydroxylase 3 (736 aa).

The N-terminal stretch at 1–20 (MLRLLRPLLLLLLLPPPGSP) is a signal peptide. TPR repeat units lie at residues 37–70 (PDLL…QAAL), 154–187 (REPY…NPMH), and 216–249 (HWAA…SLAQ). Positions 253–275 (CRADCEGPEEQQGAEEEEDGAAS) are disordered. Residues 258 to 272 (EGPEEQQGAEEEEDG) show a composition bias toward acidic residues. The TPR 4 repeat unit spans residues 316 to 349 (PNQLRRLHEAHAQVGNLSQAIENVLSVLLFYPED). N-linked (GlcNAc...) asparagine glycans are attached at residues N331 and N462. In terms of domain architecture, Fe2OG dioxygenase spans 561-675 (THLVCRSAIE…RCALALWHTW (115 aa)). Positions 584, 586, and 656 each coordinate Fe cation. Residue R666 is part of the active site. A coiled-coil region spans residues 681-709 (EQEWIEAKELLQESQEEEEEEEEEMPSKD). A disordered region spans residues 689–736 (ELLQESQEEEEEEEEEMPSKDPSPEPPSRRHQRVQDKTGRAPRVREEL). The segment covering 694–704 (SQEEEEEEEEE) has biased composition (acidic residues). Basic and acidic residues predominate over residues 721-736 (RVQDKTGRAPRVREEL). A Prevents secretion from ER motif is present at residues 733–736 (REEL).

The protein belongs to the leprecan family. As to quaternary structure, identified in a complex with PLOD1 and P3H4. Requires Fe cation as cofactor. It depends on L-ascorbate as a cofactor. Detected in fetal cartilage (at protein level). Weak expression in heart, lung, ovary and skeletal muscle.

It localises to the endoplasmic reticulum. The enzyme catalyses L-prolyl-[collagen] + 2-oxoglutarate + O2 = trans-3-hydroxy-L-prolyl-[collagen] + succinate + CO2. Functionally, part of a complex composed of PLOD1, P3H3 and P3H4 that catalyzes hydroxylation of lysine residues in collagen alpha chains and is required for normal assembly and cross-linkling of collagen fibrils. Required for normal hydroxylation of lysine residues in type I collagen chains in skin, bone, tendon, aorta and cornea. Required for normal skin stability via its role in hydroxylation of lysine residues in collagen alpha chains and in collagen fibril assembly. Apparently not required for normal prolyl 3-hydroxylation on collagen chains, possibly because it functions redundantly with other prolyl 3-hydroxylases. The polypeptide is Prolyl 3-hydroxylase 3 (Homo sapiens (Human)).